A 428-amino-acid chain; its full sequence is C4-dicarboxylate transport protein (428 aa).

A run of 8 helical transmembrane segments spans residues 8-28 (SLYFQVLTAIAIGILLGHFYP), 44-64 (LIKMIIAPVIFCTVVTGIAGM), 76-96 (VALLYFEIVSTIALIIGLIIV), 142-162 (IGAFASGNILQVLLFAVLFGF), 184-204 (VIFGIINMIMRLAPIGAFGAM), 222-242 (LIICFYITCILFVVLVLGSIA), 326-346 (IVHQITLLIVLLLSSKGAAGV), and 352-372 (IVLAATLSAVGHLPVAGLALI).

It belongs to the dicarboxylate/amino acid:cation symporter (DAACS) (TC 2.A.23) family.

Its subcellular location is the cell inner membrane. Responsible for the transport of dicarboxylates such as succinate, fumarate, and malate from the periplasm across the membrane. In Escherichia coli O127:H6 (strain E2348/69 / EPEC), this protein is C4-dicarboxylate transport protein.